The primary structure comprises 380 residues: Tryptophan 2,3-dioxygenase (380 aa).

Substrate contacts are provided by residues 57–61 (FIITH) and R128. Residue H313 coordinates heme. T328 is a binding site for substrate.

Belongs to the tryptophan 2,3-dioxygenase family. In terms of assembly, homotetramer. Dimer of dimers. The cofactor is heme.

The catalysed reaction is L-tryptophan + O2 = N-formyl-L-kynurenine. The protein operates within amino-acid degradation; L-tryptophan degradation via kynurenine pathway; L-kynurenine from L-tryptophan: step 1/2. It participates in pigment biosynthesis; ommochrome biosynthesis. Its function is as follows. Heme-dependent dioxygenase that catalyzes the oxidative cleavage of the L-tryptophan (L-Trp) pyrrole ring and converts L-tryptophan to N-formyl-L-kynurenine. Catalyzes the oxidative cleavage of the indole moiety. This Drosophila mojavensis (Fruit fly) protein is Tryptophan 2,3-dioxygenase.